Here is a 385-residue protein sequence, read N- to C-terminus: 1-deoxy-D-xylulose 5-phosphate reductoisomerase (385 aa).

NADPH-binding residues include Thr11, Gly12, Ser13, Ile14, Gln39, and Asn117. Lys118 lines the 1-deoxy-D-xylulose 5-phosphate pocket. Glu119 is an NADPH binding site. Residue Asp143 coordinates Mn(2+). 4 residues coordinate 1-deoxy-D-xylulose 5-phosphate: Ser144, Glu145, Ser170, and His193. Glu145 contributes to the Mn(2+) binding site. Gly199 is an NADPH binding site. 1-deoxy-D-xylulose 5-phosphate-binding residues include Ser206, Asn211, Lys212, and Glu215. Glu215 is a binding site for Mn(2+).

It belongs to the DXR family. The cofactor is Mg(2+). Mn(2+) serves as cofactor.

It catalyses the reaction 2-C-methyl-D-erythritol 4-phosphate + NADP(+) = 1-deoxy-D-xylulose 5-phosphate + NADPH + H(+). It participates in isoprenoid biosynthesis; isopentenyl diphosphate biosynthesis via DXP pathway; isopentenyl diphosphate from 1-deoxy-D-xylulose 5-phosphate: step 1/6. In terms of biological role, catalyzes the NADPH-dependent rearrangement and reduction of 1-deoxy-D-xylulose-5-phosphate (DXP) to 2-C-methyl-D-erythritol 4-phosphate (MEP). The chain is 1-deoxy-D-xylulose 5-phosphate reductoisomerase from Thermomicrobium roseum (strain ATCC 27502 / DSM 5159 / P-2).